A 60-amino-acid polypeptide reads, in one-letter code: Ixodegrin-like peptide (60 aa).

An N-terminal signal peptide occupies residues 1–19 (MNAVFIAALLILGTSTFDA). The Cell attachment site signature appears at 49–51 (RGD).

This sequence belongs to the ixodegrin family. In terms of processing, contains 3 disulfide bonds. As to expression, expressed in salivary glands.

It localises to the secreted. Its function is as follows. Tick salivary platelet aggregation inhibitor that plays an important part in the anti-hemostatic strategy of ticks. Inhibits platelet aggregation induced by ADP, thrombin and thromboxane A2 (TXA2). Blocks platelet adhesion to soluble collagen (most probably through the binding to alpha-2/beta-1 integrin (ITGA2/ITGB1)) and binds to purified glycoprotein IIb/IIIa (ITGA2B/ITGB3) in a dose-dependent manner. In vivo, reduces thrombus weight effectively in a rat arteriovenous shunt model and inhibits thrombosis in a carrageenan-induced mouse tail thrombosis model. The polypeptide is Ixodegrin-like peptide (Ixodes scapularis (Black-legged tick)).